Consider the following 947-residue polypeptide: MGKKIRVYELAQKMGVDNKVLLEKLHEAGIDAKSHMSVLSEEDVEKLDEAPAKVERVEERRITAGVIRRRRKEVPQEEKAAPPAAAEEPSSVDTAVAEEAPAEEVQPVSDQPEIAVEPPPAGKQEEVAAPAPEPKAEEPVVEEVIAEPAVEEVVEEPSAVEQEEHVETTPVAEEEPKVEEQPSVEAESKAVSGELEESKTADQSKGQSEAAEVSVTKEKPKVEKATANRAKILGRVELSTLTSPPKRQERAKNGKGRPERPKGAKPSGGPAPRAKEAAPQAAVPFDGGPAPDKEVRGGKKGKKGKGNSYDKDKGFADGGKGRRARRQVYEPERDERRMRRGKKTPKPQKKTEVTVSKAIKRIIRISDVITVGELAKRMGVKSKDLITELMRQGQMVTINHPLDFETAAILASEFNYEVENVAFDEENLLADTAAVTEEGDSEEGCVPRPPVVTIMGHVDHGKTSLLDAIRATNVTGGEAGGITQHIGAYDVSVDDKKITFLDTPGHEAFTSMRARGAKVTDIVILVVAADDGVMPQTKEAINHSKAAGVPIIVAVNKMDKPDANSDRVKQELTEFEMIPEEWGGDTIFVEVSAKNRTNLDSLLEMVLLQAEVLELKANPNKRAKGAIVEARLDRGRGPVATVLVEEGTLRIGDPIVSGLHYGKVRTMTNDRGERLEEAGPACPVEVTGLSGTPTAGDSFHAVESEKDAKEVATHRQRKVREQELASTSKISLEQLYARMQEGEVQELKVIIKADVQGSVEAVRDSLVKLSTDACRLVVIHTAVGGINESDVSLASASDAIILGFNVRAESKAAALAETEGVDIRFYNVIYDAVNDIRDAMEGLLAPTLREKHLGKVEVRETFHVSKVGTIAGCYVTEGKVLRNAQVRLIRDHVVIWEGKLASLKRFKDDAREVQNGYECGLSLENYNDIKVGDIIEVFEMEEVKTSL.

The segment at 69 to 353 is disordered; the sequence is RRRKEVPQEE…TPKPQKKTEV (285 aa). A compositionally biased stretch (low complexity) spans 81–108; that stretch reads APPAAAEEPSSVDTAVAEEAPAEEVQPV. A compositionally biased stretch (acidic residues) spans 139–155; sequence PVVEEVIAEPAVEEVVE. Composition is skewed to basic and acidic residues over residues 215–226 and 246–262; these read VTKEKPKVEKAT and KRQE…ERPK. The segment covering 264–284 has biased composition (low complexity); that stretch reads AKPSGGPAPRAKEAAPQAAVP. A compositionally biased stretch (basic and acidic residues) spans 327–337; sequence QVYEPERDERR. Basic residues predominate over residues 338–348; that stretch reads MRRGKKTPKPQ. One can recognise a tr-type G domain in the interval 447–616; that stretch reads PRPPVVTIMG…LLQAEVLELK (170 aa). A G1 region spans residues 456–463; sequence GHVDHGKT. Residue 456–463 coordinates GTP; it reads GHVDHGKT. Residues 481-485 form a G2 region; the sequence is GITQH. The interval 502 to 505 is G3; it reads DTPG. GTP contacts are provided by residues 502–506 and 556–559; these read DTPGH and NKMD. The segment at 556–559 is G4; that stretch reads NKMD. The segment at 592–594 is G5; sequence SAK.

The protein belongs to the TRAFAC class translation factor GTPase superfamily. Classic translation factor GTPase family. IF-2 subfamily.

It localises to the cytoplasm. Its function is as follows. One of the essential components for the initiation of protein synthesis. Protects formylmethionyl-tRNA from spontaneous hydrolysis and promotes its binding to the 30S ribosomal subunits. Also involved in the hydrolysis of GTP during the formation of the 70S ribosomal complex. The protein is Translation initiation factor IF-2 of Syntrophotalea carbinolica (strain DSM 2380 / NBRC 103641 / GraBd1) (Pelobacter carbinolicus).